The following is a 35-amino-acid chain: uncharacterized protein (35 aa).

A signal peptide spans 1-25; it reads MTERKLLQLLRRPFISLSLFTALRA.

This is an uncharacterized protein from Saccharomyces cerevisiae (strain ATCC 204508 / S288c) (Baker's yeast).